The sequence spans 422 residues: MAAAAVIEFQRAQEMLVSDRAASIDILQSIVKRDIQESDEEALRVKEQSILELGGLLAKTGQAAELGGLLKYVRPFLNSISKAKAARLVRSLLDLFLDMEAATGQEVELCLECIEWAKAEKRTFLRQALEARLVSLYFDTKRYQEALQLGSQLLRELKKMDDKALLVEVQLLESKTYHALSNLPKARAALTSARTTANAIYCPPKLQAALDMQSGIIHAAEEKDWKTAYSYFYEAFEGNDSIDSPKAITALKYMLLCKIMLNTPEDVQALVSGKLALRYAGRQTEALKCVAQASKNRSLANFEKALTDYKAELRDDPIISTHLAKLYDNLLEQNLIRVIEPFSRVQIDHISSLIKLPKPEVERKLSQMILDKKFHGILDQGEGVLIIFDEPPVDKTYEAALETIQNMSKVVDSLYNKAKKLT.

The PCI domain maps to 224–392 (DWKTAYSYFY…GVLIIFDEPP (169 aa)).

The protein belongs to the proteasome subunit S9 family. As to quaternary structure, component of the 19S proteasome regulatory particle complex. The 26S proteasome consists of a 20S core particle (CP) and two 19S regulatory subunits (RP). The regulatory particle is made of a lid composed of 9 subunits including PSMD11, a base containing 6 ATPases and few additional components.

The protein localises to the nucleus. It localises to the cytoplasm. Its subcellular location is the cytosol. Component of the 26S proteasome, a multiprotein complex involved in the ATP-dependent degradation of ubiquitinated proteins. This complex plays a key role in the maintenance of protein homeostasis by removing misfolded or damaged proteins, which could impair cellular functions, and by removing proteins whose functions are no longer required. Therefore, the proteasome participates in numerous cellular processes, including cell cycle progression, apoptosis, or DNA damage repair. In the complex, PSMD11 is required for proteasome assembly. Plays a key role in increased proteasome activity in embryonic stem cells (ESCs): its high expression in ESCs promotes enhanced assembly of the 26S proteasome, followed by higher proteasome activity. The sequence is that of 26S proteasome non-ATPase regulatory subunit 11 (psmd11) from Xenopus tropicalis (Western clawed frog).